We begin with the raw amino-acid sequence, 236 residues long: UPF0257 lipoprotein YnfC (236 aa).

The N-terminal stretch at 1–16 (MKYKLLPCLLAILLTG) is a signal peptide. Residue Cys-17 is the site of N-palmitoyl cysteine attachment. A lipid anchor (S-diacylglycerol cysteine) is attached at Cys-17.

The protein belongs to the UPF0257 family.

The protein localises to the cell membrane. This is UPF0257 lipoprotein YnfC from Escherichia coli O127:H6 (strain E2348/69 / EPEC).